The chain runs to 906 residues: MQHIFAFFCTGFLGAVVGANFPNNIQIGGLFPNQQSQEHAAFRFALSQLTEPPKLLPQIDIVNISDSFEMTYRFCSQFSKGVYAIFGFYERRTVNMLTSFCGALHVCFITPSFPVDTSNQFVLQLRPELQDALISIIDHYKWQKFVYIYDADRGLSVLQKVLDTAAEKNWQVTAVNILTTTEEGYRMLFQDLEKKKERLVVVDCESERLNAILGQIIKLEKNGIGYHYILANLGFMDIDLNKFKESGANVTGFQLVNYTDTIPAKIMQQWKNSDARDHTRVDWKRPKYTSALTYDGVKVMAEAFQSLRRQRIDISRRGNAGDCLANPAVPWGQGIDIQRALQQVRFEGLTGNVQFNEKGRRTNYTLHVIEMKHDGIRKIGYWNEDDKFVPAATDAQAGGDNSSVQNRTYIVTTILEDPYVMLKKNANQFEGNDRYEGYCVELAAEIAKHVGYSYRLEIVSDGKYGARDPDTKAWNGMVGELVYGRADVAVAPLTITLVREEVIDFSKPFMSLGISIMIKKPQKSKPGVFSFLDPLAYEIWMCIVFAYIGVSVVLFLVSRFSPYEWHSEEFEEGRDQTTSDQSNEFGIFNSLWFSLGAFMQQGCDISPRSLSGRIVGGVWWFFTLIIISSYTANLAAFLTVERMVSPIESAEDLAKQTEIAYGTLEAGSTKEFFRRSKIAVFEKMWTYMKSAEPSVFVRTTEEGMIRVRKSKGKYAYLLESTMNEYIEQRKPCDTMKVGGNLDSKGYGIATPKGSALRNPVNLAVLKLNEQGLLDKLKNKWWYDKGECGSGGGDSKDKTSALSLSNVAGVFYILIGGLGLAMLVALIEFCYKSRSESKRMKGFCLIPQQSINEAIRTSTLPRNSGAGASSAGSGENGRVVSHDFPKSMQSIPCMSHSSGMPLGATGL.

The signal sequence occupies residues 1 to 18 (MQHIFAFFCTGFLGAVVG). The Extracellular segment spans residues 19–536 (ANFPNNIQIG…GVFSFLDPLA (518 aa)). N63, N249, N257, N363, N401, and N406 each carry an N-linked (GlcNAc...) asparagine glycan. A disulfide bridge connects residues C75 and C323. P492, T494, and R499 together coordinate L-glutamate. A helical membrane pass occupies residues 537–557 (YEIWMCIVFAYIGVSVVLFLV). Topologically, residues 558 to 584 (SRFSPYEWHSEEFEEGRDQTTSDQSNE) are cytoplasmic. Residues 585 to 600 (FGIFNSLWFSLGAFMQ) constitute an intramembrane region (helical; Pore-forming). The stretch at 601–603 (QGC) is an intramembrane region. C603 carries the S-palmitoyl cysteine lipid modification. The Cytoplasmic portion of the chain corresponds to 604–609 (DISPRS). Residues 610 to 630 (LSGRIVGGVWWFFTLIIISSY) form a helical membrane-spanning segment. Residues 631 to 805 (TANLAAFLTV…DKTSALSLSN (175 aa)) lie on the Extracellular side of the membrane. Phosphoserine is present on S645. L-glutamate is bound by residues S668 and T669. Position 710 is a phosphoserine (S710). E719 is an L-glutamate binding site. C732 and C787 are oxidised to a cystine. The chain crosses the membrane as a helical span at residues 806–826 (VAGVFYILIGGLGLAMLVALI). The Cytoplasmic portion of the chain corresponds to 827-906 (EFCYKSRSES…SGMPLGATGL (80 aa)). Residue C829 is the site of S-palmitoyl cysteine attachment. S849 and S863 each carry phosphoserine. The interval 861–880 (RNSGAGASSAGSGENGRVVS) is disordered. A compositionally biased stretch (low complexity) spans 863-872 (SGAGASSAGS). The short motif at 903 to 906 (ATGL) is the PDZ-binding element.

This sequence belongs to the glutamate-gated ion channel (TC 1.A.10.1) family. GRIA1 subfamily. As to quaternary structure, homotetramer or heterotetramer of pore-forming glutamate receptor subunits; heteromeric assembly can be the result of both receptor subtype and flip-flop forms and according the composition, one partner can be dominant with respect to the fast desensitizing current component, whereas the other can determine the steady-state component. Tetramers may be formed by the dimerization of dimers. Found in a complex with GRIA2, GRIA3, GRIA4, CNIH2, CNIH3, CACNG2, CACNG3, CACNG4, CACNG5, CACNG7 and CACNG8. Interacts with HIP1 and RASGRF2. Interacts with SYNDIG1 and GRIA2. Interacts with DLG1 (via C-terminus). Interacts with LRFN1. Interacts with PRKG2. Interacts with CNIH2 and CACNG2. Interacts with CACNG5; this interaction modulates the gating. Interacts (via C-terminus) with PDLIM4 (via LIM domain); this interaction as well as the interaction of PDLIM4 with alpha-actinin is required for their colocalization in early endosomes. Interacts with SNX27 (via PDZ domain); the interaction is required for recycling to the plasma membrane when endocytosed and prevent degradation in lysosomes. Interacts (via PDZ-binding motif) with SHANK3 (via PDZ domain). Interacts with CACNG3; associates GRIA1 with the adapter protein complex 4 (AP-4) to target GRIA1 to the somatodendritic compartment of neurons. Interacts with CACNG2; this interaction mediates traffick to the plasma membrane and modulation of desensitization. Interaction with CNIH2 and CNIH3; this interaction promotes expression at the plasma membrane and extensively modulates their gating properties by slowing deactivation and desensitization kinetics. Found in a complex with GRIA2, GRIA3, GRIA4, DLG4, CACNG8 and CNIH2. Post-translationally, phosphorylated at Ser-645. Phosphorylated at Ser-710 by PKC. Phosphorylated at Ser-849 by PKC, PKA and CAMK2. Phosphorylated at Ser-863 by PKC, PKA and PRKG2. Phosphorylation of Ser-863 is reduced by induction of long-term depression and increased by induction of long-term potentiation. Palmitoylated. Depalmitoylated by CPT1C and upon L-glutamate stimulation. ZDHHC3/GODZ specifically palmitoylates Cys-603, which leads to Golgi retention and decreased cell surface expression. In contrast, Cys-829 palmitoylation does not affect cell surface expression but regulates stimulation-dependent endocytosis.

The protein localises to the cell membrane. It localises to the endoplasmic reticulum membrane. The protein resides in the postsynaptic cell membrane. Its subcellular location is the postsynaptic density membrane. It is found in the cell projection. The protein localises to the dendrite. It localises to the dendritic spine. The protein resides in the early endosome membrane. Its subcellular location is the recycling endosome membrane. It is found in the presynapse. The protein localises to the synapse. It carries out the reaction Ca(2+)(in) = Ca(2+)(out). The enzyme catalyses Na(+)(in) = Na(+)(out). The catalysed reaction is Mg(2+)(in) = Mg(2+)(out). It catalyses the reaction Li(+)(in) = Li(+)(out). It carries out the reaction K(+)(in) = K(+)(out). The enzyme catalyses Sr(2+)(in) = Sr(2+)(out). Its function is as follows. Ionotropic glutamate receptor that functions as a ligand-gated cation channel, gated by L-glutamate and glutamatergic agonists such as alpha-amino-3-hydroxy-5-methyl-4-isoxazolepropionic acid (AMPA), quisqualic acid, and kainic acid. L-glutamate acts as an excitatory neurotransmitter at many synapses in the central nervous system. Binding of the excitatory neurotransmitter L-glutamate induces a conformation change, leading to the opening of the cation channel, and thereby converts the chemical signal to an electrical impulse upon entry of monovalent and divalent cations such as sodium and calcium. The receptor then desensitizes rapidly and enters in a transient inactive state, characterized by the presence of bound agonist. In the presence of CACNG2 or CACNG4 or CACNG7 or CACNG8, shows resensitization which is characterized by a delayed accumulation of current flux upon continued application of L-glutamate. Calcium (Ca(2+)) permeability depends on subunits composition and, heteromeric channels containing edited GRIA2 subunit are calcium-impermeable. Also permeable to other divalents cations such as strontium(2+) and magnesium(2+) and monovalent cations such as potassium(1+) and lithium(1+). The chain is Glutamate receptor 1 from Macaca fascicularis (Crab-eating macaque).